The primary structure comprises 143 residues: Transcriptional regulator MraZ (143 aa).

SpoVT-AbrB domains follow at residues 5–47 (EFQH…TLTE) and 76–119 (AVEV…DRKL).

The protein belongs to the MraZ family. In terms of assembly, forms oligomers.

It is found in the cytoplasm. The protein localises to the nucleoid. This Macrococcus caseolyticus (strain JCSC5402) (Macrococcoides caseolyticum) protein is Transcriptional regulator MraZ.